Consider the following 226-residue polypeptide: 2,3-bisphosphoglycerate-dependent phosphoglycerate mutase (226 aa).

Substrate contacts are provided by residues 8-15 (RHGQSVWN), 21-22 (TG), R58, 109-112 (ERMY), K120, 136-137 (RR), and 180-181 (GN). Catalysis depends on H9, which acts as the Tele-phosphohistidine intermediate. E109 serves as the catalytic Proton donor/acceptor.

It belongs to the phosphoglycerate mutase family. BPG-dependent PGAM subfamily.

It carries out the reaction (2R)-2-phosphoglycerate = (2R)-3-phosphoglycerate. Its pathway is carbohydrate degradation; glycolysis; pyruvate from D-glyceraldehyde 3-phosphate: step 3/5. Its function is as follows. Catalyzes the interconversion of 2-phosphoglycerate and 3-phosphoglycerate. This is 2,3-bisphosphoglycerate-dependent phosphoglycerate mutase from Chlamydia trachomatis serovar A (strain ATCC VR-571B / DSM 19440 / HAR-13).